A 297-amino-acid polypeptide reads, in one-letter code: UDP-N-acetylenolpyruvoylglucosamine reductase (297 aa).

Residues 22 to 195 form the FAD-binding PCMH-type domain; it reads RAGGTARYYA…LAGRFRLQRG (174 aa). The active site involves R169. The Proton donor role is filled by S223. Residue E293 is part of the active site.

Belongs to the MurB family. Requires FAD as cofactor.

It is found in the cytoplasm. It carries out the reaction UDP-N-acetyl-alpha-D-muramate + NADP(+) = UDP-N-acetyl-3-O-(1-carboxyvinyl)-alpha-D-glucosamine + NADPH + H(+). Its pathway is cell wall biogenesis; peptidoglycan biosynthesis. Its function is as follows. Cell wall formation. This Chloroflexus aurantiacus (strain ATCC 29364 / DSM 637 / Y-400-fl) protein is UDP-N-acetylenolpyruvoylglucosamine reductase.